Consider the following 161-residue polypeptide: Endoribonuclease YbeY (161 aa).

3 residues coordinate Zn(2+): H120, H124, and H130.

It belongs to the endoribonuclease YbeY family. The cofactor is Zn(2+).

The protein localises to the cytoplasm. Single strand-specific metallo-endoribonuclease involved in late-stage 70S ribosome quality control and in maturation of the 3' terminus of the 16S rRNA. This is Endoribonuclease YbeY from Erythrobacter litoralis (strain HTCC2594).